The primary structure comprises 433 residues: Shufflon protein C' (433 aa).

The constant region stretch occupies residues 1–361; that stretch reads MKKYDRGWAS…TGAILSCQSG (361 aa). The segment at 362–433 is variable region; it reads RWSGGNKINY…HVDAYCCPFN (72 aa).

The protein is Shufflon protein C' of Escherichia coli.